The sequence spans 320 residues: Olfactory receptor 51E2 (320 aa).

The Extracellular segment spans residues 1-24; the sequence is MSSCNFTHATFVLIGIPGLEKAHF. The N-linked (GlcNAc...) asparagine glycan is linked to Asn-5. The helical transmembrane segment at 25-45 threads the bilayer; that stretch reads WVGFPLLSMYVVAMFGNCIVV. Residues 46-53 are Cytoplasmic-facing; the sequence is FIVRTERS. Residues 54–74 form a helical membrane-spanning segment; sequence LHAPMYLFLCMLAAIDLALST. Residues 75–98 are Extracellular-facing; it reads STMPKILALFWFDSREISFEACLT. Cys-96 and Cys-178 are oxidised to a cystine. The chain crosses the membrane as a helical span at residues 99–119; it reads QMFFIHALSAIESTILLAMAF. Over 120-138 the chain is Cytoplasmic; that stretch reads DRYVAICHPLRHAAVLNNT. The chain crosses the membrane as a helical span at residues 139-159; sequence VTAQIGIVAVVRGSLFFFPLP. At 160-195 the chain is on the extracellular side; the sequence is LLIKRLAFCHSNVLSHSYCVHQDVMKLAYADTLPNV. Residues 196–216 traverse the membrane as a helical segment; sequence VYGLTAILLVMGVDVMFISLS. The Cytoplasmic segment spans residues 217 to 236; sequence YFLIIRTVLQLPSKSERAKA. Residues 237–257 traverse the membrane as a helical segment; sequence FGTCVSHIGVVLAFYVPLIGL. Residues 258-272 lie on the Extracellular side of the membrane; sequence SVVHRFGNSLHPIVR. Residues 273-293 traverse the membrane as a helical segment; sequence VVMGDIYLLLPPVINPIIYGA. The Cytoplasmic segment spans residues 294–320; sequence KTKQIRTRVLAMFKISCDKDLQAVGGK.

The protein belongs to the G-protein coupled receptor 1 family. Highly expressed in the prostate. Also expressed in spleen, liver, olfactory epithelium, retinal pigment epithelium and medulla oblongata. In the retinal pigment epithelium expression is restricted to the pigment cells and choroid (at protein level). Expressed in epidermal melanocytes (at protein level).

It localises to the cell membrane. It is found in the early endosome membrane. In terms of biological role, olfactory receptor. Activated by the odorant, beta-ionone, a synthetic terpenoid. The activity of this receptor is probably mediated by G-proteins leading to the elevation of intracellular Ca(2+), cAMP and activation of the protein kinases PKA and MAPK3/MAPK1. Stimulation of OR51E2 by beta-ionone affects melanocyte proliferation, differentiation, and melanogenesis. Activation of OR51E2 by beta-ionone increases proliferation and migration of primary retinal pigment epithelial (RPE) cells. Activated also by the short-chain fatty acids (SCFA) acetate and propionate. In response to SCFA, may positively regulate renin secretion and increase blood pressure. May also be activated by steroid hormones and regulate cell proliferation. Activated by L-lactate in glomus cells. The protein is Olfactory receptor 51E2 of Homo sapiens (Human).